Reading from the N-terminus, the 143-residue chain is MTTSRRKAREIVLQALYEQDLAGHNAEDVLKRLLTENPQTEENVEFIFRLTNAVVKHKDLLDENIRQFASAWPVEQLSYIDRNVLRLAIFEIIHENDVPVKVAINEAVELAKSFGGNSSARFINGVLSSVSKALADTANQREE.

This sequence belongs to the NusB family.

Its function is as follows. Involved in transcription antitermination. Required for transcription of ribosomal RNA (rRNA) genes. Binds specifically to the boxA antiterminator sequence of the ribosomal RNA (rrn) operons. This chain is Transcription antitermination protein NusB, found in Dehalococcoides mccartyi (strain CBDB1).